The primary structure comprises 316 residues: Acetaldehyde dehydrogenase (316 aa).

11-14 (SGNI) provides a ligand contact to NAD(+). The active-site Acyl-thioester intermediate is Cys131. Residues 162–170 (SAGPGTRAN) and Asn289 each bind NAD(+).

Belongs to the acetaldehyde dehydrogenase family. In terms of assembly, interacts with MhpE.

The enzyme catalyses acetaldehyde + NAD(+) + CoA = acetyl-CoA + NADH + H(+). It functions in the pathway aromatic compound metabolism; 3-phenylpropanoate degradation. Catalyzes the conversion of acetaldehyde to acetyl-CoA, using NAD(+) and coenzyme A. Is the final enzyme in the meta-cleavage pathway for the degradation of aromatic compounds. The protein is Acetaldehyde dehydrogenase of Escherichia coli O7:K1 (strain IAI39 / ExPEC).